The primary structure comprises 1183 residues: Spermatogenesis-associated protein 31G1 (1183 aa).

6 disordered regions span residues 109 to 153 (TPIG…FPTF), 469 to 555 (LMPA…SPWA), 661 to 686 (TVDD…SSEP), 843 to 884 (ASQG…VSEV), 973 to 1032 (CLHS…TGLL), and 1048 to 1087 (QKRG…PAEA). The span at 124–134 (CRSEGRPRATE) shows a compositional bias: basic and acidic residues. A compositionally biased stretch (polar residues) spans 135 to 153 (TQEQVLIQSPSPSRSFPTF). The segment covering 487–509 (NPKERLSAPKDVRENLGYREHPH) has biased composition (basic and acidic residues). The segment covering 671–685 (TGKNTDNTKKCSSSE) has biased composition (polar residues). The segment covering 847–858 (PNPPAVNPPQPT) has biased composition (pro residues). The span at 975-984 (HSSSQPQAQA) shows a compositional bias: polar residues. Over residues 993–1002 (QKSKRLKRKA) the composition is skewed to basic residues. Positions 1069–1079 (SPTNTRENNPA) are enriched in polar residues.

Expressed in kidney and testis. Expressed at lower levels in stomach, intestine, epididymis and ovary. Expressed at very low levels in heart and spleen.

Functionally, dispensable for normal development and fertility. This Mus musculus (Mouse) protein is Spermatogenesis-associated protein 31G1 (Spata31g1).